Here is a 393-residue protein sequence, read N- to C-terminus: Alpha-1,2 mannosyltransferase KTR1 (393 aa).

Residues 1-16 are Cytoplasmic-facing; that stretch reads MAKIMIPASKQPVYKK. The chain crosses the membrane as a helical; Signal-anchor for type II membrane protein span at residues 17-34; it reads LGLLLVAVFTVYVFFHGA. The tract at residues 35–68 is stem region; it reads QYARGSAPSPKYSTVLSSGSGYKYSKVELPKYTG. Topologically, residues 35–393 are lumenal; the sequence is QYARGSAPSP…KPAGWQNHIG (359 aa). Residues 69-393 form a catalytic region; the sequence is PREKATFVTL…KPAGWQNHIG (325 aa). A glycan (N-linked (GlcNAc...) asparagine) is linked at N120. Residue E280 is the Nucleophile of the active site.

The protein belongs to the glycosyltransferase 15 family. Mn(2+) is required as a cofactor. In terms of processing, N-glycosylated.

It is found in the golgi apparatus membrane. Its pathway is protein modification; protein glycosylation. In terms of biological role, mannosyltransferase that transfers a mannose residue from GDP-mannose to a range of acceptors in vitro, forming an alpha-(1-&gt;2)-D-mannosyl-D-mannose linkage. This chain is Alpha-1,2 mannosyltransferase KTR1 (KTR1), found in Saccharomyces cerevisiae (strain ATCC 204508 / S288c) (Baker's yeast).